The chain runs to 152 residues: Outer membrane protein assembly factor BamE (152 aa).

Positions 1–32 (MIDQNHDSEEQAQMQKLTRTVTLTVALTLVSG) are cleaved as a signal peptide. A lipid anchor (N-palmitoyl cysteine) is attached at C33. Residue C33 is the site of S-diacylglycerol cysteine attachment. Residues 114-152 (IDRHGDFSRPPSVADERGIGPTDSTNARGNLLNARPDDE) form a disordered region.

This sequence belongs to the BamE family. As to quaternary structure, part of the Bam complex.

It is found in the cell outer membrane. Part of the outer membrane protein assembly complex, which is involved in assembly and insertion of beta-barrel proteins into the outer membrane. This Halomonas elongata (strain ATCC 33173 / DSM 2581 / NBRC 15536 / NCIMB 2198 / 1H9) protein is Outer membrane protein assembly factor BamE.